A 160-amino-acid chain; its full sequence is 6,7-dimethyl-8-ribityllumazine synthase (160 aa).

5-amino-6-(D-ribitylamino)uracil is bound by residues W28, 59 to 61 (SFE), and 82 to 84 (VII). (2S)-2-hydroxy-3-oxobutyl phosphate is bound at residue 87–88 (GT). Residue H90 is the Proton donor of the active site. F115 provides a ligand contact to 5-amino-6-(D-ribitylamino)uracil. R129 is a binding site for (2S)-2-hydroxy-3-oxobutyl phosphate.

Belongs to the DMRL synthase family.

It carries out the reaction (2S)-2-hydroxy-3-oxobutyl phosphate + 5-amino-6-(D-ribitylamino)uracil = 6,7-dimethyl-8-(1-D-ribityl)lumazine + phosphate + 2 H2O + H(+). It functions in the pathway cofactor biosynthesis; riboflavin biosynthesis; riboflavin from 2-hydroxy-3-oxobutyl phosphate and 5-amino-6-(D-ribitylamino)uracil: step 1/2. Functionally, catalyzes the formation of 6,7-dimethyl-8-ribityllumazine by condensation of 5-amino-6-(D-ribitylamino)uracil with 3,4-dihydroxy-2-butanone 4-phosphate. This is the penultimate step in the biosynthesis of riboflavin. The chain is 6,7-dimethyl-8-ribityllumazine synthase from Clavibacter sepedonicus (Clavibacter michiganensis subsp. sepedonicus).